Here is a 256-residue protein sequence, read N- to C-terminus: MRHSPRKRFGQNFLQDKYIINEILRAINPLADDNMLEIGPGLGALTQPLLQKLNQLTAIEIDTDLQSYLTCLPASQGKLNLIPADALTVDFCQFGPHLRVVGNLPYNISTPLLIYLLKFITCIDDMHFMLQKEVVERIAAAHGTKAYGRLSVMLQYHCEVEYLFDVPPEAFEPRPKVDSAIVRLTPYRVSPFESVNTEKLENIVAKAFAMRRKTLTNNLKGIISLSQLNDLGIDGGKRPEQISVAEYVQLAKFISN.

6 residues coordinate S-adenosyl-L-methionine: Asn12, Leu14, Gly39, Glu60, Asp85, and Asn103.

This sequence belongs to the class I-like SAM-binding methyltransferase superfamily. rRNA adenine N(6)-methyltransferase family. RsmA subfamily.

Its subcellular location is the cytoplasm. The enzyme catalyses adenosine(1518)/adenosine(1519) in 16S rRNA + 4 S-adenosyl-L-methionine = N(6)-dimethyladenosine(1518)/N(6)-dimethyladenosine(1519) in 16S rRNA + 4 S-adenosyl-L-homocysteine + 4 H(+). In terms of biological role, specifically dimethylates two adjacent adenosines (A1518 and A1519) in the loop of a conserved hairpin near the 3'-end of 16S rRNA in the 30S particle. May play a critical role in biogenesis of 30S subunits. The protein is Ribosomal RNA small subunit methyltransferase A of Legionella pneumophila subsp. pneumophila (strain Philadelphia 1 / ATCC 33152 / DSM 7513).